A 586-amino-acid chain; its full sequence is Adenine deaminase (586 aa).

It belongs to the metallo-dependent hydrolases superfamily. Adenine deaminase family. Mn(2+) is required as a cofactor.

The catalysed reaction is adenine + H2O + H(+) = hypoxanthine + NH4(+). The polypeptide is Adenine deaminase (Bdellovibrio bacteriovorus (strain ATCC 15356 / DSM 50701 / NCIMB 9529 / HD100)).